A 271-amino-acid chain; its full sequence is Ribosomal RNA small subunit methyltransferase A (271 aa).

Residues Asn-18, Leu-20, Gly-45, Glu-66, Asp-91, and Asn-112 each coordinate S-adenosyl-L-methionine.

The protein belongs to the class I-like SAM-binding methyltransferase superfamily. rRNA adenine N(6)-methyltransferase family. RsmA subfamily.

It localises to the cytoplasm. The enzyme catalyses adenosine(1518)/adenosine(1519) in 16S rRNA + 4 S-adenosyl-L-methionine = N(6)-dimethyladenosine(1518)/N(6)-dimethyladenosine(1519) in 16S rRNA + 4 S-adenosyl-L-homocysteine + 4 H(+). In terms of biological role, specifically dimethylates two adjacent adenosines (A1518 and A1519) in the loop of a conserved hairpin near the 3'-end of 16S rRNA in the 30S particle. May play a critical role in biogenesis of 30S subunits. The sequence is that of Ribosomal RNA small subunit methyltransferase A from Vibrio atlanticus (strain LGP32) (Vibrio splendidus (strain Mel32)).